We begin with the raw amino-acid sequence, 128 residues long: Prefoldin subunit 1 (128 aa).

Coiled-coil stretches lie at residues 17 to 37 (MIEL…KEGD) and 81 to 115 (LKDS…LLQQ).

This sequence belongs to the prefoldin subunit beta family. In terms of assembly, heterohexamer of two PFD-alpha type and four PFD-beta type subunits forming prefoldin co-chaperone complex. Interacts with LSM8, a specific subunit of the LSM2-8 complex, which is a core component of the spliceosome.

Its subcellular location is the cytoplasm. It is found in the nucleus. Its function is as follows. Binds specifically to cytosolic chaperonin (c-CPN) and transfers target proteins to it. Binds to nascent polypeptide chain and promotes folding in an environment in which there are many competing pathways for nonnative proteins. Together with other chaperonins, contribute to the regulation of gene expression by modulating the spliceosome function on pre-mRNA splicing post-transcriptionally by acting as a co-chaperone of Hsp90 to control levels of LSM8. Required for microtubules (MTs) organization and dynamicity. Involved in the process leading to microtubules dissociation in response to gibberellic acid (GA) probably due to the DELLA proteins-mediated translocation of the prefoldin co-chaperone complex from the cytoplasm to the nucleus. In Arabidopsis thaliana (Mouse-ear cress), this protein is Prefoldin subunit 1.